Reading from the N-terminus, the 175-residue chain is Crossover junction endodeoxyribonuclease RuvC (175 aa).

Catalysis depends on residues aspartate 16, glutamate 76, and aspartate 148. Positions 16, 76, and 148 each coordinate Mg(2+).

It belongs to the RuvC family. Homodimer which binds Holliday junction (HJ) DNA. The HJ becomes 2-fold symmetrical on binding to RuvC with unstacked arms; it has a different conformation from HJ DNA in complex with RuvA. In the full resolvosome a probable DNA-RuvA(4)-RuvB(12)-RuvC(2) complex forms which resolves the HJ. Mg(2+) is required as a cofactor.

It is found in the cytoplasm. The enzyme catalyses Endonucleolytic cleavage at a junction such as a reciprocal single-stranded crossover between two homologous DNA duplexes (Holliday junction).. Functionally, the RuvA-RuvB-RuvC complex processes Holliday junction (HJ) DNA during genetic recombination and DNA repair. Endonuclease that resolves HJ intermediates. Cleaves cruciform DNA by making single-stranded nicks across the HJ at symmetrical positions within the homologous arms, yielding a 5'-phosphate and a 3'-hydroxyl group; requires a central core of homology in the junction. The consensus cleavage sequence is 5'-(A/T)TT(C/G)-3'. Cleavage occurs on the 3'-side of the TT dinucleotide at the point of strand exchange. HJ branch migration catalyzed by RuvA-RuvB allows RuvC to scan DNA until it finds its consensus sequence, where it cleaves and resolves the cruciform DNA. The chain is Crossover junction endodeoxyribonuclease RuvC from Bradyrhizobium sp. (strain BTAi1 / ATCC BAA-1182).